A 302-amino-acid polypeptide reads, in one-letter code: Acetaldehyde dehydrogenase (302 aa).

Catalysis depends on cysteine 131, which acts as the Acyl-thioester intermediate. Residues 162–170 (SAGPGTRKN) and asparagine 273 each bind NAD(+).

It belongs to the acetaldehyde dehydrogenase family.

The catalysed reaction is acetaldehyde + NAD(+) + CoA = acetyl-CoA + NADH + H(+). This chain is Acetaldehyde dehydrogenase, found in Acidovorax sp. (strain JS42).